A 248-amino-acid chain; its full sequence is PF03932 family protein CutC (248 aa).

The protein belongs to the CutC family. Homodimer.

The protein localises to the cytoplasm. The protein is PF03932 family protein CutC of Escherichia coli O17:K52:H18 (strain UMN026 / ExPEC).